The chain runs to 267 residues: tRNA pseudouridine synthase A (267 aa).

Asp55 (nucleophile) is an active-site residue. A substrate-binding site is contributed by Tyr111.

The protein belongs to the tRNA pseudouridine synthase TruA family.

It carries out the reaction uridine(38/39/40) in tRNA = pseudouridine(38/39/40) in tRNA. In terms of biological role, formation of pseudouridine at positions 38, 39 and 40 in the anticodon stem and loop of transfer RNAs. The chain is tRNA pseudouridine synthase A from Thermococcus gammatolerans (strain DSM 15229 / JCM 11827 / EJ3).